Here is a 418-residue protein sequence, read N- to C-terminus: AA11 family lytic polysaccharide monooxygenase B (418 aa).

Residues 1–21 form the signal peptide; it reads MMFSKSGLVAVAMLGASAVEA. Residues H22 and H82 each contribute to the Cu(+) site. 3 disulfides stabilise this stretch: C50–C165, C87–C113, and C206–C240. 2 N-linked (GlcNAc...) asparagine glycosylation sites follow: N120 and N134. The segment at 226–345 is disordered; that stretch reads DGNPSNLQPA…SSSSSNGALT (120 aa). The segment covering 254–345 has biased composition (low complexity); the sequence is SPSTPSTSSS…SSSSSNGALT (92 aa).

Belongs to the polysaccharide monooxygenase AA11 family. Cu(2+) is required as a cofactor.

The protein resides in the secreted. Functionally, lytic polysaccharide monooxygenase (LPMO)-like protein that acts as a strict peroxygenase and does not catalyze a monooxygenase reaction. It is indeed hardly active on chitin, while being very active on soluble oligomers of N-acetylglucosamine. Cleaves the glycosidic bonds byoxidizing the C1 position. Also unable to oxidize cellopentaose. Probably breaks glycosidic bonds in non-polymeric substrates possibly carbohydrates in the cell wall of the fungus or its competitors. In the presence of chitotetraose, the enzyme can withstand considerable amounts of H(2)O(2), which it uses to efficiently and stoichiometrically convert this substrate. In Aspergillus fumigatus (strain ATCC MYA-4609 / CBS 101355 / FGSC A1100 / Af293) (Neosartorya fumigata), this protein is AA11 family lytic polysaccharide monooxygenase B.